Consider the following 303-residue polypeptide: Mycothiol acetyltransferase (303 aa).

2 consecutive N-acetyltransferase domains span residues 4–141 and 154–303; these read ITVR…RSLA and IVLR…ANGA. 1D-myo-inositol 2-(L-cysteinylamino)-2-deoxy-alpha-D-glucopyranoside is bound at residue glutamate 38. Acetyl-CoA is bound at residue 80–82; the sequence is AAV. 1D-myo-inositol 2-(L-cysteinylamino)-2-deoxy-alpha-D-glucopyranoside contacts are provided by glutamate 181, lysine 223, and glutamate 234. Residues 238–240 and 245–251 contribute to the acetyl-CoA site; these read VGI and QGRGLGR. 1D-myo-inositol 2-(L-cysteinylamino)-2-deoxy-alpha-D-glucopyranoside is bound at residue tyrosine 272. 277–282 lines the acetyl-CoA pocket; that stretch reads NTAAVN.

This sequence belongs to the acetyltransferase family. MshD subfamily. In terms of assembly, monomer.

The enzyme catalyses 1D-myo-inositol 2-(L-cysteinylamino)-2-deoxy-alpha-D-glucopyranoside + acetyl-CoA = mycothiol + CoA + H(+). Functionally, catalyzes the transfer of acetyl from acetyl-CoA to desacetylmycothiol (Cys-GlcN-Ins) to form mycothiol. In Nocardia farcinica (strain IFM 10152), this protein is Mycothiol acetyltransferase.